The chain runs to 392 residues: MAGKSGEEKMKAMEAEMALFEQEVLGAPVALPPVDPVPLPIPAVPVIRAIIATNTYSQVQQSLEARAAAAASVVGPMIVPPVPFVGPAIPPPRPPVMRPSFIPHALQRPAEPHGAMPRPSFIPHVLQQRAVGPRHPGMPPPQPLMAHHMHGPPPPLMRHIPPPPLGMRAGPPPAPVGPLPPPPRPVVPSAPKMNPTVIQAAPTVYTAPPVRKPEEEIVEPPILPDEKETLSFEEAVIGPSMPEMEPVQPEVVLEPVQEDKKKTKPEKLKRCIRTAAGTSWEDQSLLEWESDDFRIFCGDLGNEVNDDILARAFSRYPSFLRAKVIRDKRTGKTKGYGFVSFKDPNDYVRAMREMNGKYVGSRPIKLRKSQWKDRNMDVVRKKQREKKKLGLR.

The RRM domain occupies 293-371; the sequence is FRIFCGDLGN…RPIKLRKSQW (79 aa). The interval 372–392 is disordered; sequence KDRNMDVVRKKQREKKKLGLR. The span at 381-392 shows a compositional bias: basic residues; it reads KKQREKKKLGLR.

The protein belongs to the RRM RBM42 family.

The protein resides in the nucleus. The protein localises to the cytoplasm. Its function is as follows. May bind RNA. The polypeptide is RNA-binding protein 42 (rbm42) (Xenopus tropicalis (Western clawed frog)).